Here is a 141-residue protein sequence, read N- to C-terminus: Large ribosomal subunit protein uL11 (141 aa).

It belongs to the universal ribosomal protein uL11 family. As to quaternary structure, part of the ribosomal stalk of the 50S ribosomal subunit. Interacts with L10 and the large rRNA to form the base of the stalk. L10 forms an elongated spine to which L12 dimers bind in a sequential fashion forming a multimeric L10(L12)X complex. Post-translationally, one or more lysine residues are methylated.

Functionally, forms part of the ribosomal stalk which helps the ribosome interact with GTP-bound translation factors. This Syntrophus aciditrophicus (strain SB) protein is Large ribosomal subunit protein uL11.